A 421-amino-acid chain; its full sequence is MIDMLVLRIPFKSSLVSERLDSKGNYVSHVNLAEVARLSGLTLAAHTVEYAIDGDLTVSGLKHPYESLPSHYAGIALKIFEGGKNFEPCVELKASPAKLLQGHNVFGPTSFELCGLEFFGAFAAAMPELYDLCDVTNTVVGRIDVTFSAKVANDHIANQVISFLRNVSNGQTKKTRALDYETTVMWNEGSRHRTLVAYLKHHEVQAQIKRLQKKKSSHLTIYEKNCLEVLSNPDLQLYAVGLVRFEARLHTRFFENFGLPRKFFDIVKYQDNYESGSFNLICDLWKKSFKDLFDAFKGSDMNVYDDSKVYDALINNFSSVTKSGNISNSKANRLFGFYRRLVNEGYDNVAQTMERTTFWRSLKELTSVGLSKAQLMNLSTDNNVVPLVQMINVDFSQQYPEWYVEPVSIFNRSNVVSINAA.

This sequence belongs to the inovirus G2P protein family.

The catalysed reaction is ATP + (deoxyribonucleotide)n-3'-hydroxyl + 5'-phospho-(deoxyribonucleotide)m = (deoxyribonucleotide)n+m + AMP + diphosphate.. In terms of biological role, isoform G2P plays an essential role in viral DNA replication. Binds the origin of replication and cleaves the dsDNA replicative form I (RFI) and becomes covalently bound to it via phosphotyrosine bond, generating the dsDNA replicative form II (RFII). In turn, viral DNA replication initiates at the 3'-OH of the cleavage site. After one round of rolling circle synthesis, protein G2P is linked to the newly synthesized ssDNA and joins the ends of the displaced strand to generate a circular single-stranded molecule ready to be packed into a virion. Isoform G10P protein binds to double-stranded DNA and prevents hydrolysis by nucleases. Additionally, G10P is an inhibitor of DNA replication and may have a role in the transition from semiconservative replicative form DNA replication to single-stranded DNA synthesis in the life cycle. The chain is Replication-associated protein G2P (II) from Escherichia coli (Bacteriophage IKe).